Consider the following 521-residue polypeptide: Cytochrome P450 monooxygenase gloO (521 aa).

Positions methionine 1–alanine 26 are cleaved as a signal peptide. Residue cysteine 464 participates in heme binding.

The protein belongs to the cytochrome P450 family. Requires heme as cofactor.

It functions in the pathway mycotoxin biosynthesis. Cytochrome P450 monooxygenase; part of the gene cluster that mediates the biosynthesis of pneumocandins, lipohexapeptides of the echinocandin family that prevent fungal cell wall formation by non-competitive inhibition of beta-1,3-glucan synthase. The 10,12-dimethylmyristoyl side chain is synthesized by the reducing polyketide synthase gloL/GLPKS4. The thioesterase gloN/GLHYD exclusively interacts with gloL/GLPKS4 to maintain turnover of the polyketide side chain. The 10R,12S-dimethylmyristic acid is then transferred to the first thiolation domain of the nonribosomal peptide synthetase gloA/GLNRPS4 by the acyl-AMP ligase gloD/GLligase, followed by its acylation to L-ornithine to trigger elongation of the cyclic hexapeptide. L-ornithine, 4R-hydroxyl-L-proline (generated from L-proline by the dioxygenase gloF/GLOXY2), 3S-hydroxyl-L-homotyrosine (generated by gloG/GLHtyB, gloH/GLHtyA, gloI/GLHtyC, gloJ/GLHtyD and hydroxylated at C-3 by the dioxygenase gloM/GLOXY1), 3R-hydroxyl-L-glutamine (generated from L-glutamine probably by the dioxygenase gloE/GLOXY3) and 3S-hydroxyl-L-proline (generated from L-proline by the dioxygenase gloF/GLOXY2 to yield pneumocandin B0), or 3S-hydroxyl-4S-methyl-L-proline (generated from L-leucine by the dioxygenase gloC/GLOXY4 to yield pneumocandin A0) are sequentially added to the growing chain. The last C domain of gloA/GLNRPS4 is proposed to be responsible for cyclization by condensation to form the peptide bond between L-ornithine and 3S-hydroxyl-4S-methyl-L-proline (for pneumocandin A0) or 3S-hydroxyl-L-proline (for pneumocandin B0). Finally, the subsequent C-4 hydroxylation of 3S-hydroxyl-L-homotyrosine and L-ornithine dihydroxylation at C-4 and C-5 are performed by the cytochrome P450 monooxygenases gloP/GLP450-1 and gloO/GLP450-2, respectively. This chain is Cytochrome P450 monooxygenase gloO, found in Glarea lozoyensis (strain ATCC 20868 / MF5171).